Consider the following 1413-residue polypeptide: DNA-directed RNA polymerase subunit beta' (1413 aa).

Zn(2+) contacts are provided by C70, C72, C85, and C88. The Mg(2+) site is built by D460, D462, and D464. Positions 819, 893, 900, and 903 each coordinate Zn(2+). The interval 1392-1413 is disordered; it reads EEAFDFGTPSAPAEEPQHPAAE.

It belongs to the RNA polymerase beta' chain family. The RNAP catalytic core consists of 2 alpha, 1 beta, 1 beta' and 1 omega subunit. When a sigma factor is associated with the core the holoenzyme is formed, which can initiate transcription. Mg(2+) serves as cofactor. The cofactor is Zn(2+).

The enzyme catalyses RNA(n) + a ribonucleoside 5'-triphosphate = RNA(n+1) + diphosphate. DNA-dependent RNA polymerase catalyzes the transcription of DNA into RNA using the four ribonucleoside triphosphates as substrates. This Burkholderia orbicola (strain MC0-3) protein is DNA-directed RNA polymerase subunit beta'.